We begin with the raw amino-acid sequence, 356 residues long: Tyrosine recombinase XerS (356 aa).

Residues Ile-16–Thr-121 form the Core-binding (CB) domain. The region spanning Ala-169–Asp-354 is the Tyr recombinase domain. Residues Arg-210, Lys-234, His-306, Arg-309, and His-332 contribute to the active site. The active-site O-(3'-phospho-DNA)-tyrosine intermediate is Tyr-341.

This sequence belongs to the 'phage' integrase family. XerS subfamily.

Its subcellular location is the cytoplasm. FtsK is required for recombination. Functionally, site-specific tyrosine recombinase, which acts by catalyzing the cutting and rejoining of the recombining DNA molecules. Essential to convert dimers of the bacterial chromosome into monomers to permit their segregation at cell division. This chain is Tyrosine recombinase XerS, found in Streptococcus equi subsp. zooepidemicus (strain MGCS10565).